Reading from the N-terminus, the 151-residue chain is D-aminoacyl-tRNA deacylase (151 aa).

A Gly-cisPro motif, important for rejection of L-amino acids motif is present at residues 136–137; it reads GP.

The protein belongs to the DTD family. In terms of assembly, homodimer.

It localises to the cytoplasm. It catalyses the reaction glycyl-tRNA(Ala) + H2O = tRNA(Ala) + glycine + H(+). The catalysed reaction is a D-aminoacyl-tRNA + H2O = a tRNA + a D-alpha-amino acid + H(+). An aminoacyl-tRNA editing enzyme that deacylates mischarged D-aminoacyl-tRNAs. Also deacylates mischarged glycyl-tRNA(Ala), protecting cells against glycine mischarging by AlaRS. Acts via tRNA-based rather than protein-based catalysis; rejects L-amino acids rather than detecting D-amino acids in the active site. By recycling D-aminoacyl-tRNA to D-amino acids and free tRNA molecules, this enzyme counteracts the toxicity associated with the formation of D-aminoacyl-tRNA entities in vivo and helps enforce protein L-homochirality. The sequence is that of D-aminoacyl-tRNA deacylase from Lactococcus lactis subsp. lactis (strain IL1403) (Streptococcus lactis).